The primary structure comprises 60 residues: Light-harvesting polypeptide B-885 alpha-2 chain (60 aa).

The Cytoplasmic portion of the chain corresponds to 1–16 (SAPAQWKLWLVMDPRT). Residues 17-37 (VMIGTAAWLGVLALLIHFLLL) form a helical membrane-spanning segment. Residue His-33 coordinates a bacteriochlorophyll. The Periplasmic segment spans residues 38-60 (GTERFNWIDTGLKEQKATAAAQA).

It belongs to the antenna complex alpha subunit family. In terms of assembly, the core complex is formed by different alpha and beta chains, binding bacteriochlorophyll molecules, and arranged most probably in tetrameric structures disposed around the reaction center. The non-pigmented gamma chains may constitute additional components.

Its subcellular location is the cell inner membrane. Antenna complexes are light-harvesting systems, which transfer the excitation energy to the reaction centers. This is Light-harvesting polypeptide B-885 alpha-2 chain from Rhodocyclus tenuis (Rhodospirillum tenue).